Consider the following 286-residue polypeptide: tRNA (guanine-N(7)-)-methyltransferase (286 aa).

Residues G103, 126 to 127 (EI), 161 to 162 (NA), and C181 contribute to the S-adenosyl-L-methionine site. The active site involves D184. 259-261 (TEE) is an S-adenosyl-L-methionine binding site.

Belongs to the class I-like SAM-binding methyltransferase superfamily. TrmB family. In terms of assembly, forms a complex with TRM82.

It is found in the nucleus. It carries out the reaction guanosine(46) in tRNA + S-adenosyl-L-methionine = N(7)-methylguanosine(46) in tRNA + S-adenosyl-L-homocysteine. Its pathway is tRNA modification; N(7)-methylguanine-tRNA biosynthesis. Its function is as follows. Catalyzes the formation of N(7)-methylguanine at position 46 (m7G46) in tRNA. The protein is tRNA (guanine-N(7)-)-methyltransferase of Vanderwaltozyma polyspora (strain ATCC 22028 / DSM 70294 / BCRC 21397 / CBS 2163 / NBRC 10782 / NRRL Y-8283 / UCD 57-17) (Kluyveromyces polysporus).